Reading from the N-terminus, the 309-residue chain is MCASVTESLPKFPELKTRDLQGQQGPIRSLGWNLSGSRLASSSSSGSVLVWNSDRLDFKFTTELGNRGYGLVEQLVWDPTHSDRLMAVYAGKMIRFWDFRSAKPIAEIESNYENIYATWSPSGNYCCASSRDDMLSFIDARERRIMETFQQPCETNECCWSFSEDLFFMTTGLGTVQIMEWPSLKRVYDIKAHNSNCFCIEFSPDNRHLAIGGADAITSLWDPQELICERSITRMDYPIRTLSFSYDSRYLASGSEDRYVDIADTKTGDQIWKIPTNGPLNKVAWHPTKHILAYAVSEPNSSGLKIFGL.

WD repeat units follow at residues 22–61 (GQQG…FKFT), 65–107 (GNRG…PIAE), 109–148 (ESNY…IMET), 192–231 (AHNS…CERS), 234–273 (RMDY…QIWK), and 275–309 (PTNG…IFGL).

Belongs to the THOC3 family. Component of the transcription/export (TREX) complex, which is at least is formed of SUB2, TEX1 and YRA1 and the THO complex composed of HPR1, MFT1, THO2 and THP1.

The protein resides in the nucleus. Component of the TREX complex, which operates in coupling transcription elongation to mRNA export. The polypeptide is THO complex subunit Tho3 (THO3) (Schizosaccharomyces pombe (strain 972 / ATCC 24843) (Fission yeast)).